We begin with the raw amino-acid sequence, 128 residues long: Probable 4-amino-4-deoxy-L-arabinose-phosphoundecaprenol flippase subunit ArnF (128 aa).

Residues Met-1 to Gly-2 are Cytoplasmic-facing. A helical transmembrane segment spans residues Leu-3 to Ala-23. Over Ala-24 to Asp-35 the chain is Periplasmic. A helical transmembrane segment spans residues Phe-36–Gly-56. Topologically, residues Tyr-57–Ala-76 are cytoplasmic. The helical transmembrane segment at Tyr-77–Trp-97 threads the bilayer. Residues Glu-98–Thr-100 are Periplasmic-facing. The chain crosses the membrane as a helical span at residues Phe-101–Leu-121. Residues Pro-122–Tyr-128 are Cytoplasmic-facing.

The protein belongs to the ArnF family. As to quaternary structure, heterodimer of ArnE and ArnF.

The protein resides in the cell inner membrane. The protein operates within bacterial outer membrane biogenesis; lipopolysaccharide biosynthesis. In terms of biological role, translocates 4-amino-4-deoxy-L-arabinose-phosphoundecaprenol (alpha-L-Ara4N-phosphoundecaprenol) from the cytoplasmic to the periplasmic side of the inner membrane. The polypeptide is Probable 4-amino-4-deoxy-L-arabinose-phosphoundecaprenol flippase subunit ArnF (Shigella boydii serotype 4 (strain Sb227)).